A 24-amino-acid polypeptide reads, in one-letter code: Coenzyme PQQ synthesis protein A (24 aa).

The segment at residues 16-20 (EITMY) is a cross-link (pyrroloquinoline quinone (Glu-Tyr)).

This sequence belongs to the PqqA family.

The protein operates within cofactor biosynthesis; pyrroloquinoline quinone biosynthesis. Functionally, required for coenzyme pyrroloquinoline quinone (PQQ) biosynthesis. PQQ is probably formed by cross-linking a specific glutamate to a specific tyrosine residue and excising these residues from the peptide. The sequence is that of Coenzyme PQQ synthesis protein A from Burkholderia cenocepacia (strain ATCC BAA-245 / DSM 16553 / LMG 16656 / NCTC 13227 / J2315 / CF5610) (Burkholderia cepacia (strain J2315)).